Here is a 98-residue protein sequence, read N- to C-terminus: Co-chaperonin GroES (98 aa).

The protein belongs to the GroES chaperonin family. Heptamer of 7 subunits arranged in a ring. Interacts with the chaperonin GroEL.

The protein resides in the cytoplasm. Together with the chaperonin GroEL, plays an essential role in assisting protein folding. The GroEL-GroES system forms a nano-cage that allows encapsulation of the non-native substrate proteins and provides a physical environment optimized to promote and accelerate protein folding. GroES binds to the apical surface of the GroEL ring, thereby capping the opening of the GroEL channel. The protein is Co-chaperonin GroES of Neorickettsia sennetsu (strain ATCC VR-367 / Miyayama) (Ehrlichia sennetsu).